Reading from the N-terminus, the 230-residue chain is Flagellar L-ring protein (230 aa).

The signal sequence occupies residues 1–15 (MSRLPSLSSLCLAIA). Cys-16 is lipidated: N-palmitoyl cysteine. Cys-16 carries the S-diacylglycerol cysteine lipid modification.

The protein belongs to the FlgH family. In terms of assembly, the basal body constitutes a major portion of the flagellar organelle and consists of four rings (L,P,S, and M) mounted on a central rod.

Its subcellular location is the cell outer membrane. It is found in the bacterial flagellum basal body. Assembles around the rod to form the L-ring and probably protects the motor/basal body from shearing forces during rotation. This is Flagellar L-ring protein from Xanthomonas campestris pv. campestris (strain 8004).